Reading from the N-terminus, the 181-residue chain is Adenine phosphoribosyltransferase (181 aa).

This sequence belongs to the purine/pyrimidine phosphoribosyltransferase family. As to quaternary structure, homodimer.

Its subcellular location is the cytoplasm. The enzyme catalyses AMP + diphosphate = 5-phospho-alpha-D-ribose 1-diphosphate + adenine. The protein operates within purine metabolism; AMP biosynthesis via salvage pathway; AMP from adenine: step 1/1. In terms of biological role, catalyzes a salvage reaction resulting in the formation of AMP, that is energically less costly than de novo synthesis. In Methylobacterium radiotolerans (strain ATCC 27329 / DSM 1819 / JCM 2831 / NBRC 15690 / NCIMB 10815 / 0-1), this protein is Adenine phosphoribosyltransferase.